Here is a 262-residue protein sequence, read N- to C-terminus: Hemin import ATP-binding protein HmuV (262 aa).

Residues 5 to 242 enclose the ABC transporter domain; sequence LEARKAGFAT…ELIGAVFDVE (238 aa). Residue 37–44 coordinates ATP; the sequence is GPNGAGKS.

This sequence belongs to the ABC transporter superfamily. Heme (hemin) importer (TC 3.A.1.14.5) family. In terms of assembly, the complex is composed of two ATP-binding proteins (HmuV), two transmembrane proteins (HmuU) and a solute-binding protein (HmuT).

The protein resides in the cell inner membrane. Functionally, part of the ABC transporter complex HmuTUV involved in hemin import. Responsible for energy coupling to the transport system. The chain is Hemin import ATP-binding protein HmuV from Rhodopseudomonas palustris (strain HaA2).